Reading from the N-terminus, the 200-residue chain is LexA repressor (200 aa).

Positions 28–48 form a DNA-binding region, H-T-H motif; the sequence is RAEIAEILGFKSANAAEEHLK. Residues Ser118 and Lys155 each act as for autocatalytic cleavage activity in the active site.

The protein belongs to the peptidase S24 family. Homodimer.

The enzyme catalyses Hydrolysis of Ala-|-Gly bond in repressor LexA.. In terms of biological role, represses a number of genes involved in the response to DNA damage (SOS response), including recA and lexA. In the presence of single-stranded DNA, RecA interacts with LexA causing an autocatalytic cleavage which disrupts the DNA-binding part of LexA, leading to derepression of the SOS regulon and eventually DNA repair. The sequence is that of LexA repressor from Teredinibacter turnerae (strain ATCC 39867 / T7901).